A 75-amino-acid chain; its full sequence is uncharacterized protein (75 aa).

A compositionally biased stretch (low complexity) spans 1 to 14 (MNDNNDNNNNNKNI). Residues 1-30 (MNDNNDNNNNNKNIDNVDDDNDDNDKGKYK) form a disordered region.

This is an uncharacterized protein from Dictyostelium discoideum (Social amoeba).